A 331-amino-acid polypeptide reads, in one-letter code: POU domain, class 4, transcription factor 3 (331 aa).

Positions 81-97 (TSSSSTVPISHPSSNLP) are enriched in low complexity. Residues 81–108 (TSSSSTVPISHPSSNLPSHHHHHLSHQT) are disordered. Positions 172-249 (DVESDPRELE…VLQAWLEEAE (78 aa)) constitute a POU-specific domain. Residues 267 to 326 (RKRKRTSIAAPEKRSLEAYFAIQPRPSSEKIAAIAEKLDLKKNVVRVWFCNQRQKQKRMK) constitute a DNA-binding region (homeobox).

The protein belongs to the POU transcription factor family. Class-4 subfamily. Interaction with ISL1. As to expression, expressed in the nervous system. Expressed in the otic vesicle during embryogenesis. Expressed in the adult retina in a subset of retinal ganglion cells (RGCs), and at a lower level in the adult tectum. Not expressed in the adult olfactory bulb.

It is found in the nucleus. The protein resides in the cytoplasm. In terms of biological role, acts as a transcriptional activator. Acts by binding to sequences related to the consensus octamer motif 5'-ATGCAAAT-3' in the regulatory regions of its target genes. May play a role in specifying terminally differentiated neuronal phenotypes. This chain is POU domain, class 4, transcription factor 3 (pou4f3), found in Danio rerio (Zebrafish).